Reading from the N-terminus, the 787-residue chain is Endonuclease MutS2 (787 aa).

334–341 provides a ligand contact to ATP; it reads GPNTGGKT. The Smr domain occupies 712–787; it reads LDLRGKRYEE…GNGATIVTFK (76 aa).

Belongs to the DNA mismatch repair MutS family. MutS2 subfamily. Homodimer. Binds to stalled ribosomes, contacting rRNA.

Endonuclease that is involved in the suppression of homologous recombination and thus may have a key role in the control of bacterial genetic diversity. Functionally, acts as a ribosome collision sensor, splitting the ribosome into its 2 subunits. Detects stalled/collided 70S ribosomes which it binds and splits by an ATP-hydrolysis driven conformational change. Acts upstream of the ribosome quality control system (RQC), a ribosome-associated complex that mediates the extraction of incompletely synthesized nascent chains from stalled ribosomes and their subsequent degradation. Probably generates substrates for RQC. In Latilactobacillus sakei subsp. sakei (strain 23K) (Lactobacillus sakei subsp. sakei), this protein is Endonuclease MutS2.